A 123-amino-acid chain; its full sequence is Small ribosomal subunit protein bS16 (123 aa).

Residues 79–123 (AGIAKRPSRNNPTKGEPGKKAQERLALAKQAEEEAAAKAAEAASE) are disordered.

The protein belongs to the bacterial ribosomal protein bS16 family.

The polypeptide is Small ribosomal subunit protein bS16 (Brucella melitensis biotype 2 (strain ATCC 23457)).